The chain runs to 469 residues: Glutamine synthetase (469 aa).

The GS beta-grasp domain maps to 14–98; that stretch reads NDVKYVDLRF…ITCDVLEPTT (85 aa). Residues 106–469 enclose the GS catalytic domain; sequence PRGIAKKAEA…PVEFDMYYSG (364 aa). Residues Glu-131 and Glu-133 each contribute to the Mg(2+) site. Glu-209 lines the ATP pocket. Mg(2+) contacts are provided by Glu-214 and Glu-221. Residues 265–266 and Gly-266 contribute to the L-glutamate site; that span reads NG. Residue His-270 participates in Mg(2+) binding. Residues 272–274 and Ser-274 each bind ATP; that span reads HQS. L-glutamate is bound by residues Arg-322, Glu-328, and Arg-340. ATP contacts are provided by Arg-340, Arg-345, and Lys-353. Glu-358 provides a ligand contact to Mg(2+). Arg-360 is an L-glutamate binding site. Tyr-398 is subject to O-AMP-tyrosine.

The protein belongs to the glutamine synthetase family. As to quaternary structure, oligomer of 12 subunits arranged in the form of two hexameric ring. The cofactor is Mg(2+).

The protein resides in the cytoplasm. The enzyme catalyses L-glutamate + NH4(+) + ATP = L-glutamine + ADP + phosphate + H(+). Its activity is regulated as follows. The activity of this enzyme could be controlled by adenylation under conditions of abundant glutamine. Its function is as follows. Catalyzes the ATP-dependent biosynthesis of glutamine from glutamate and ammonia. This Bradyrhizobium diazoefficiens (strain JCM 10833 / BCRC 13528 / IAM 13628 / NBRC 14792 / USDA 110) protein is Glutamine synthetase.